The following is an 87-amino-acid chain: Small ribosomal subunit protein uS17 (87 aa).

This sequence belongs to the universal ribosomal protein uS17 family. As to quaternary structure, part of the 30S ribosomal subunit.

Functionally, one of the primary rRNA binding proteins, it binds specifically to the 5'-end of 16S ribosomal RNA. The chain is Small ribosomal subunit protein uS17 from Endomicrobium trichonymphae.